The primary structure comprises 453 residues: Phosphoglucosamine mutase (453 aa).

Residue S109 is the Phosphoserine intermediate of the active site. Mg(2+) is bound by residues S109, D246, D248, and D250. Phosphoserine is present on S109.

Belongs to the phosphohexose mutase family. Requires Mg(2+) as cofactor. In terms of processing, activated by phosphorylation.

The catalysed reaction is alpha-D-glucosamine 1-phosphate = D-glucosamine 6-phosphate. Functionally, catalyzes the conversion of glucosamine-6-phosphate to glucosamine-1-phosphate. This is Phosphoglucosamine mutase from Leifsonia xyli subsp. xyli (strain CTCB07).